The primary structure comprises 881 residues: Valine--tRNA ligase (881 aa).

A 'HIGH' region motif is present at residues 49-59 (PNVTGKLHLGH). A 'KMSKS' region motif is present at residues 526 to 530 (KMSKS). Lysine 529 serves as a coordination point for ATP. Residues 810–881 (LADLINLDEE…VRQRLADLEK (72 aa)) are a coiled coil.

The protein belongs to the class-I aminoacyl-tRNA synthetase family. ValS type 1 subfamily. In terms of assembly, monomer.

The protein resides in the cytoplasm. It catalyses the reaction tRNA(Val) + L-valine + ATP = L-valyl-tRNA(Val) + AMP + diphosphate. In terms of biological role, catalyzes the attachment of valine to tRNA(Val). As ValRS can inadvertently accommodate and process structurally similar amino acids such as threonine, to avoid such errors, it has a 'posttransfer' editing activity that hydrolyzes mischarged Thr-tRNA(Val) in a tRNA-dependent manner. This Bacillus cereus (strain ATCC 10987 / NRS 248) protein is Valine--tRNA ligase.